The following is a 177-amino-acid chain: Inorganic pyrophosphatase (177 aa).

Substrate is bound by residues Lys31, Arg45, and Tyr57. Residues Asp67, Asp72, and Asp104 each coordinate Mg(2+). Tyr142 is a substrate binding site.

It belongs to the PPase family. In terms of assembly, homohexamer. Mg(2+) is required as a cofactor.

It is found in the cytoplasm. The catalysed reaction is diphosphate + H2O = 2 phosphate + H(+). In terms of biological role, catalyzes the hydrolysis of inorganic pyrophosphate (PPi) forming two phosphate ions. This is Inorganic pyrophosphatase from Neisseria meningitidis serogroup A / serotype 4A (strain DSM 15465 / Z2491).